Here is a 208-residue protein sequence, read N- to C-terminus: MFTGLVEAIGVVKDVQGTIDNGFAMKIEAPQILDDCHTGDSIAVNGTCLTVTDFDRYHFTVGIAPESLRLTNLGQCKAGDPVNLERAVLSSTRMGGHFVQGHVDTVAEIVEKKQDGEAIDFTFRPRDPFVLKYIVYKGYIALDGTSLTITHVDDSTFSIMMISYTQSKVIMAKKNVGDLVNVEVDQIGKYTEKLVEAHIADWIKKTQA.

Lumazine-binding repeat units follow at residues 1–97 and 98–195; these read MFTG…MGGH and FVQG…EKLV. Residues 4 to 6, 48 to 50, 62 to 67, 101 to 103, Lys137, 146 to 148, and 160 to 165 each bind 2,4-dihydroxypteridine; these read GLV, CLT, GIAPES, GHV, SLT, and MMISYT.

Homotrimer.

It carries out the reaction 2 6,7-dimethyl-8-(1-D-ribityl)lumazine + H(+) = 5-amino-6-(D-ribitylamino)uracil + riboflavin. It participates in cofactor biosynthesis; riboflavin biosynthesis; riboflavin from 2-hydroxy-3-oxobutyl phosphate and 5-amino-6-(D-ribitylamino)uracil: step 2/2. Functionally, catalyzes the dismutation of two molecules of 6,7-dimethyl-8-ribityllumazine, resulting in the formation of riboflavin and 5-amino-6-(D-ribitylamino)uracil. This Schizosaccharomyces pombe (strain 972 / ATCC 24843) (Fission yeast) protein is Riboflavin synthase (rib5).